The following is a 423-amino-acid chain: Progestin and adipoQ receptor-like protein 1 (423 aa).

Over 1-201 the chain is Cytoplasmic; it reads MDPDEVNQAL…KSIWSLHTET (201 aa). Residues 54–140 form a disordered region; that stretch reads VVSPTNSDDE…DEDELEVDVK (87 aa). A compositionally biased stretch (acidic residues) spans 60 to 69; it reads SDDEEGEFCS. Residues 104 to 114 are compositionally biased toward basic residues; sequence TVLRYRRKKGG. A helical membrane pass occupies residues 202–222; it reads GNIWTHLIGCVAFFLLACWFL. Residues 223–234 are Extracellular-facing; it reads TRPDNHIQFQEK. A helical transmembrane segment spans residues 235 to 252; it reads VVFSFFFAGAVSVSDSRS. Topologically, residues 253-288 are cytoplasmic; the sequence is PSTPSRVIRSTSSRYSANSTIWESRCSLSARLFQPK. The chain crosses the membrane as a helical span at residues 289-309; it reads ITYIAMVCVLGIGAIVVSLWD. Residues 310 to 320 lie on the Extracellular side of the membrane; the sequence is KFSESKYRPVR. A helical transmembrane segment spans residues 321–341; it reads AAVFVGMGCSGVIPTIHYIIT. At 342 to 351 the chain is on the cytoplasmic side; it reads DGVHSLFADN. The chain crosses the membrane as a helical span at residues 352-372; sequence SFHWLLLMAFLYLLGAALYAT. Residues 373–392 are Extracellular-facing; sequence RTPERFFPGKCDIWFQSHQL. The chain crosses the membrane as a helical span at residues 393–413; the sequence is FHTCVVIAAFVHYYGISEMAF. The Cytoplasmic portion of the chain corresponds to 414–423; it reads ARLNEQCPVR.

This sequence belongs to the ADIPOR family.

It localises to the membrane. Probable receptor, which may be involved in metabolic pathways that regulate lipid metabolism such as fatty acid oxidation. The polypeptide is Progestin and adipoQ receptor-like protein 1 (Caenorhabditis briggsae).